Consider the following 520-residue polypeptide: Cytochrome P450 6d3 (520 aa).

Cysteine 461 lines the heme pocket.

It belongs to the cytochrome P450 family. It depends on heme as a cofactor.

It localises to the endoplasmic reticulum membrane. It is found in the microsome membrane. In terms of biological role, metabolizes pyrethroid insecticides and other xenobiotics. The protein is Cytochrome P450 6d3 (CYP6D3) of Musca domestica (House fly).